Consider the following 613-residue polypeptide: MWIIEAEGDILKGKSRILFPGTYIVGRNVSDDSSHIQVISKSISKRHARFTILTPSEKDYFTGGPCEFEVKDLDTKFGTKVNEKVVGQNGDSYKEKDLKIQLGKCPFTINAYWRSMCIQFDNPEMLSQWASNLNLLGIPTGLRDSDATTHFVMNRQAGSSITVGTMYAFLKKTVIIDDSYLQYLSTVKESVIEDASLMPDALECFKNIIKNNDQFPSSPEDCINSLEGFSCAMLNTSSESHHLLELLGLRISTFMSLGDIDKELISKTDFVVLNNAVYDSEKISFPEGIFCLTIEQLWKIIIERNSRELISKEIERLKYATASNSTPQKIIQPQRHIQKNIVDDLFSVKKPLPCSPKSKRVKTLENLSIMDFVQPKQMFGKEPEGYLSNQSNNGSAQNKKSGDNSEKTKNSLKSSSKKSANTGSGQGKTKVEYVSYNSVDKGNSSPFKPLELNVVGEKKANAEVDSLPSENVQESEDDKAFEENRRLRNLGSVEYIRIMSSEKSNANSRHTSKYYSGRKNFKKFQKKASQKAPLQAFLSLSEHKKTEVFDQDDTDLEPVPRLMSKVESIPAGASSDKSGKSSISKKSSNSFKELSPKTNNDEDDEFNDLKFHF.

Positions 23-86 (YIVGRNVSDD…FGTKVNEKVV (64 aa)) constitute an FHA domain. 2 consecutive BRCT domains span residues 107-186 (FTIN…YLST) and 228-302 (GFSC…KIII). Serine 355 bears the Phosphoserine mark. Disordered stretches follow at residues 381-428 (KEPE…GQGK) and 546-613 (TEVF…KFHF). A compositionally biased stretch (polar residues) spans 387–399 (LSNQSNNGSAQNK). Residues 400–409 (KSGDNSEKTK) show a composition bias toward basic and acidic residues. A compositionally biased stretch (low complexity) spans 574-592 (SSDKSGKSSISKKSSNSFK). A FxF/Y motif motif is present at residues 611–613 (FHF).

It belongs to the Nibrin family. Component of the MRN complex composed of two heterodimers rad32 and rad50 associated with a single nbs1. Interacts with (phosphorylated) ctp1/CtIP. Interacts (via FxF/Y motif) with tel1/atm.

It is found in the nucleus. Its subcellular location is the chromosome. It localises to the telomere. In terms of biological role, component of the MRN complex, which plays a central role in double-strand break (DSB) repair, DNA recombination, maintenance of telomere integrity and meiosis. The MRN complex is involved in the repair of DNA double-strand breaks (DSBs) via homologous recombination (HR), an error-free mechanism which primarily occurs during S and G2 phases. The complex (1) mediates the end resection of damaged DNA, which generates proper single-stranded DNA, a key initial steps in HR, and is (2) required for the recruitment of other repair factors and efficient activation of tel1/atm upon DNA damage. The MRN complex possesses single-strand endonuclease activity and double-strand-specific 3'-5' exonuclease activity, which are provided by MRE11, to initiate end resection, which is required for single-strand invasion and recombination. Within the MRN complex, nbs1 acts as a protein-protein adapter, which specifically recognizes and binds phosphorylated proteins, promoting their recruitment to DNA damage sites. Recruits rad32 and rad50 components of the MRN complex to DSBs in response to DNA damage. Promotes the recruitment of tel1/atm to the DNA damage sites, activating tel1/atm function. Mediates the recruitment of phosphorylated ctp1/CtIP to DSBs, leading to cooperation between the MRN complex and ctp1/CtIP to initiate end resection. The polypeptide is DNA repair and telomere maintenance protein nbs1 (Schizosaccharomyces pombe (strain 972 / ATCC 24843) (Fission yeast)).